The primary structure comprises 396 residues: Elongation factor Tu (396 aa).

The region spanning 10–206 (KPHVNVGTIG…ALDTYIPTPE (197 aa)) is the tr-type G domain. Residues 19 to 26 (GHVDHGKT) form a G1 region. 19–26 (GHVDHGKT) is a binding site for GTP. Thr26 is a binding site for Mg(2+). A G2 region spans residues 60-64 (GITIN). A G3 region spans residues 81 to 84 (DCPG). GTP-binding positions include 81 to 85 (DCPGH) and 136 to 139 (NKCD). A G4 region spans residues 136-139 (NKCD). The G5 stretch occupies residues 174–176 (SAK).

The protein belongs to the TRAFAC class translation factor GTPase superfamily. Classic translation factor GTPase family. EF-Tu/EF-1A subfamily. In terms of assembly, monomer.

The protein resides in the cytoplasm. It carries out the reaction GTP + H2O = GDP + phosphate + H(+). Functionally, GTP hydrolase that promotes the GTP-dependent binding of aminoacyl-tRNA to the A-site of ribosomes during protein biosynthesis. The protein is Elongation factor Tu of Burkholderia cepacia (Pseudomonas cepacia).